The chain runs to 660 residues: DNA mismatch repair protein MutL (660 aa).

This sequence belongs to the DNA mismatch repair MutL/HexB family.

Functionally, this protein is involved in the repair of mismatches in DNA. It is required for dam-dependent methyl-directed DNA mismatch repair. May act as a 'molecular matchmaker', a protein that promotes the formation of a stable complex between two or more DNA-binding proteins in an ATP-dependent manner without itself being part of a final effector complex. The chain is DNA mismatch repair protein MutL from Streptococcus equi subsp. equi (strain 4047).